Here is a 1100-residue protein sequence, read N- to C-terminus: MTSPAKFRKDKEIIAEYETQVKEIRAQLVEQLKCLDQQCELRVQLLQDLQDFFRKKAEIEMDYSRNLEKLAERFLAKTRYTKDPQFKKEQNILSPVNCWNLLLAQVKRESRDHATLSDLYLNNIIPRFAQISEDSGRLFKKSKEVGLQLQEDLMKVLNELYTVMKTYHMYNMDSINAESKLKEAEKQEEKQMSRSVRHEEKQTPRSPDSLTNIKIEDKHVRRSSVKKIEKMKEKRQAKYTENKLKAIKARNEYLLALEATNSCVFKYYIHDLSDLIDCCDLGYHASLNRALRTYLSAEFNVETSKHGGLETIENAAENLEANSDKQRLMETYNNVFCPPMRFDFQSHMGDMVGHLCAQQPVQGELIQRCQQLQSRLSTLNIENEEVKKTMEATLQTIQDMVTIEDFDVTDCFHHSNSMESVKSTVSESFMSKPSLAKRRANQQETEQFYFTKLKEFLEGRNLITKLQAKHDLIQKTLGESQKTDYCLASGRRDSTVRKQEAIQIIPLMVESCIRFISRHGLHHEGIFRVSGSQVEVNDIKNAFERGEDPLAGDQNDHDMDSIAGVLKLYFRGLENALFPKEVFHDLMSCVSIESLQERAVHIRKVLLSLPSNILVIMRYLFAFLNHLSQYSDDNMMDPYNLAICFGPTLMSVPEGHDQVSCQAHVNELIKTIIIHHESIFPGPRELEGPVYDRGGAPEEYCDSPHIEPPLVDEPAPDTVSVIHNSDDVKSGPLTVSESDPIEAIARFDYSGRTNRELSFKKGASLLLYSRASDDWWEGRHNGTEGLVPHQYIVVQDMPDGYAGRGSPKADLEGSHDSVEEKVSTRASASSPTGGHVADIYLANLNKLRKRPEATSIRRTIRPVEEGSSGAAGGLKTSSMPAGGLAKDSSDKRPVSAHSVLNSITRHSSLKTKVEGPQVRKSTPTGRSKSFSNHRPLDPEVIAQVEHSSQDIEATMNTALSELRELERQSNVKHAPDVVLDTLEQLKSGGTSEPSSPLHSRLLREAESSQHPLQRSASSASDMPSTFRPSKTTGPKSPLSSMTTASGSTFRDNKPPATRPKPVVFPKSSSAGGSPAMGSPTTTIPPTPPPPPPPTDKSCPV.

An F-BAR domain is found at 19–324; sequence TQVKEIRAQL…AAENLEANSD (306 aa). 2 coiled-coil regions span residues 170 to 201 and 363 to 400; these read YNMD…HEEK and GELI…IQDM. Residues 181–203 show a composition bias toward basic and acidic residues; the sequence is LKEAEKQEEKQMSRSVRHEEKQT. The segment at 181-210 is disordered; it reads LKEAEKQEEKQMSRSVRHEEKQTPRSPDSL. The Rho-GAP domain occupies 496 to 680; the sequence is VRKQEAIQII…TIIIHHESIF (185 aa). An SH3 domain is found at 738 to 797; it reads SDPIEAIARFDYSGRTNRELSFKKGASLLLYSRASDDWWEGRHNGTEGLVPHQYIVVQDM. Disordered stretches follow at residues 800 to 835 and 852 to 938; these read GYAG…TGGH and EATS…PLDP. Residues 807–823 are compositionally biased toward basic and acidic residues; the sequence is PKADLEGSHDSVEEKVS. The segment covering 919-932 has biased composition (polar residues); that stretch reads RKSTPTGRSKSFSN. Residues 945–972 are a coiled coil; that stretch reads EHSSQDIEATMNTALSELRELERQSNVK. The interval 986 to 1100 is disordered; the sequence is KSGGTSEPSS…PPPTDKSCPV (115 aa). 2 stretches are compositionally biased toward polar residues: residues 987–997 and 1008–1049; these read SGGTSEPSSPL and SQHP…GSTF. Low complexity predominate over residues 1067–1081; it reads SSSAGGSPAMGSPTT. Residues 1082–1094 show a composition bias toward pro residues; it reads TIPPTPPPPPPPT.

It localises to the cell membrane. The protein resides in the cell projection. Its subcellular location is the dendritic spine. The protein localises to the postsynaptic density. It is found in the postsynaptic cell membrane. It localises to the lamellipodium. The protein resides in the cytoplasmic vesicle. Its subcellular location is the phagosome. The protein localises to the nucleus. It is found in the cytoplasm. It localises to the cytosol. Functionally, postsynaptic RAC1 GTPase activating protein (GAP) that plays a key role in neuronal morphogenesis and migration mainly during development of the cerebral cortex. Regulates excitatory and inhibitory synapse maturation and density in cortical pyramidal neurons. Mechanistically, acts by binding and deforming membranes, thereby regulating actin dynamics to regulate cell migration and differentiation. In Danio rerio (Zebrafish), this protein is SLIT-ROBO Rho GTPase-activating protein 2 (srgap2).